The sequence spans 271 residues: NH(3)-dependent NAD(+) synthetase (271 aa).

43 to 50 (GISGGQDS) provides a ligand contact to ATP. D49 is a binding site for Mg(2+). R136 serves as a coordination point for deamido-NAD(+). Residue T156 participates in ATP binding. A Mg(2+)-binding site is contributed by E161. Deamido-NAD(+)-binding residues include K169 and D176. Residues K185 and T207 each coordinate ATP. 256–257 (HK) is a binding site for deamido-NAD(+).

The protein belongs to the NAD synthetase family. In terms of assembly, homodimer.

It carries out the reaction deamido-NAD(+) + NH4(+) + ATP = AMP + diphosphate + NAD(+) + H(+). It participates in cofactor biosynthesis; NAD(+) biosynthesis; NAD(+) from deamido-NAD(+) (ammonia route): step 1/1. Its function is as follows. Catalyzes the ATP-dependent amidation of deamido-NAD to form NAD. Uses ammonia as a nitrogen source. This is NH(3)-dependent NAD(+) synthetase from Tropheryma whipplei (strain TW08/27) (Whipple's bacillus).